We begin with the raw amino-acid sequence, 343 residues long: Probable xyloglucan endotransglucosylase/hydrolase protein 30 (343 aa).

The first 23 residues, 1–23, serve as a signal peptide directing secretion; that stretch reads MSKSSYNHIFILILCLCLRSSSA. A GH16 domain is found at 24–224; it reads FTNLNTLSFE…YKFAPFVAEF (201 aa). The active-site Nucleophile is the Glu-109. Glu-113 functions as the Proton donor in the catalytic mechanism. Xyloglucan contacts are provided by residues Glu-113 and 126 to 128; that span reads QTN. Asn-132 carries an N-linked (GlcNAc...) asparagine glycan. Xyloglucan is bound by residues 136–140, 203–204, Gly-208, and Arg-285; these read HRGRE and DW. Cys-280 and Cys-293 are disulfide-bonded. The tract at residues 306–343 is disordered; sequence TGRLKFGGTEARERRRNRRQQRRPEIEIESDPDDRKLL.

Belongs to the glycosyl hydrolase 16 family. XTH group 3 subfamily. In terms of processing, contains at least one intrachain disulfide bond essential for its enzymatic activity. As to expression, predominantly expressed in green siliques.

The protein localises to the secreted. The protein resides in the cell wall. It is found in the extracellular space. It localises to the apoplast. It catalyses the reaction breaks a beta-(1-&gt;4) bond in the backbone of a xyloglucan and transfers the xyloglucanyl segment on to O-4 of the non-reducing terminal glucose residue of an acceptor, which can be a xyloglucan or an oligosaccharide of xyloglucan.. In terms of biological role, catalyzes xyloglucan endohydrolysis (XEH) and/or endotransglycosylation (XET). Cleaves and religates xyloglucan polymers, an essential constituent of the primary cell wall, and thereby participates in cell wall construction of growing tissues. The chain is Probable xyloglucan endotransglucosylase/hydrolase protein 30 (XTH30) from Arabidopsis thaliana (Mouse-ear cress).